Consider the following 504-residue polypeptide: MEEFKRNLELDRSQXHDFIYPLIFQEYIYALAHDCSLNRFLFFENPGXDNKXSLLIVKRLINHLITQIYQQNHFLFSANDSNQNQFMGYNKNWYFXMIFEGFAIVVEIPFSXQLLSSLEGKERVKSHNLRSIHSIFPFLEDKFPHLNYVLDILIPHPVHLEILVQTLRIWIKDVSSLHLLRFFLHESRNWNSLTTPKKSSFSFSKXNERLFFFLYNFHVCEYESIFVFLRNQSSHLRSISSEIFLERIFFYRKIEVSSKDFKAILWLFKDPFLHYIRYQGKSLLASKGTLVLMNKWKYYFVTFSQCYFYMWSQPRKININLLSNHSLDFMGYLSSVRLNPLMVRSQMLENAFLIRNAIKKFDTLVPITPMIGSLSXXXXXXXXXXXXXXXXXXXXXXXXXXXXXXXXXXXXXXXXXXXXXXXXXXXXXXXXXXXXXXXXXRKHKITVRAFLKKLGVGLLEEFFTEEEQVFYLTLPKASYTSGKLYRRRIWYLDIICINDLSNHE.

Belongs to the intron maturase 2 family. MatK subfamily.

It localises to the plastid. The protein resides in the chloroplast. Functionally, usually encoded in the trnK tRNA gene intron. Probably assists in splicing its own and other chloroplast group II introns. The chain is Maturase K from Chimaphila umbellata (Pipsissewa).